The chain runs to 507 residues: Heat shock 70 kDa protein 14-B (507 aa).

The protein belongs to the heat shock protein 70 family. In terms of assembly, component of ribosome-associated complex (RAC).

It localises to the cytoplasm. The protein localises to the cytosol. Its function is as follows. Component of the ribosome-associated complex (RAC), a complex involved in folding or maintaining nascent polypeptides in a folding-competent state. The protein is Heat shock 70 kDa protein 14-B (hspa14-b) of Xenopus laevis (African clawed frog).